The following is a 558-amino-acid chain: DNA ligase B (558 aa).

Lys-124 (N6-AMP-lysine intermediate) is an active-site residue.

Belongs to the NAD-dependent DNA ligase family. LigB subfamily.

It carries out the reaction NAD(+) + (deoxyribonucleotide)n-3'-hydroxyl + 5'-phospho-(deoxyribonucleotide)m = (deoxyribonucleotide)n+m + AMP + beta-nicotinamide D-nucleotide.. In terms of biological role, catalyzes the formation of phosphodiester linkages between 5'-phosphoryl and 3'-hydroxyl groups in double-stranded DNA using NAD as a coenzyme and as the energy source for the reaction. This Klebsiella pneumoniae (strain 342) protein is DNA ligase B.